The sequence spans 657 residues: Pentatricopeptide repeat-containing protein At5g44230 (657 aa).

12 PPR repeats span residues 45–79 (KELLVSSLISKLDDCINLNQIKQIHGHVLRKGLDQ), 80–112 (SCYILTKLIRTLTKLGVPMDPYARRVIEPVQFR), 113–147 (NPFLWTAVIRGYAIEGKFDEAIAMYGCMRKEEITP), 148–178 (VSFTFSALLKACGTMKDLNLGRQFHAQTFRL), 183–213 (FVYVGNTMIDMYVKCESIDCARKVFDEMPER), 214–244 (DVISWTELIAAYARVGNMECAAELFESLPTK), 245–279 (DMVAWTAMVTGFAQNAKPQEALEYFDRMEKSGIRA), 280–314 (DEVTVAGYISACAQLGASKYADRAVQIAQKSGYSP), 317–347 (HVVIGSALIDMYSKCGNVEEAVNVFMSMNNK), 348–383 (NVFTYSSMILGLATHGRAQEALHLFHYMVTQTEIKP), 384–419 (NTVTFVGALMACSHSGLVDQGRQVFDSMYQTFGVQP), and 420–450 (TRDHYTCMVDLLGRTGRLQEALELIKTMSVE). Residues 455-530 (VWGALLGACR…TPAVSWVVDK (76 aa)) are type E motif. A type E(+) motif region spans residues 532–562 (GQMHKFFPGNLNHPMSNKIQDKLEELVERLT). The type DYW motif stretch occupies residues 563–657 (VLGYQPDLSS…SGDCSCGDFW (95 aa)).

This sequence belongs to the PPR family. PCMP-H subfamily.

This chain is Pentatricopeptide repeat-containing protein At5g44230 (PCMP-H17), found in Arabidopsis thaliana (Mouse-ear cress).